Here is a 219-residue protein sequence, read N- to C-terminus: Large ribosomal subunit protein uL4 (219 aa).

Positions 45–103 are disordered; it reads ARRQGTHATKTRGQVRGGGRKPYRQKGTGRARQGSIRAPQFTGGGTVHGPQPRDYDQRT. Basic residues predominate over residues 62 to 73; the sequence is GGRKPYRQKGTG.

The protein belongs to the universal ribosomal protein uL4 family. Part of the 50S ribosomal subunit.

One of the primary rRNA binding proteins, this protein initially binds near the 5'-end of the 23S rRNA. It is important during the early stages of 50S assembly. It makes multiple contacts with different domains of the 23S rRNA in the assembled 50S subunit and ribosome. Functionally, forms part of the polypeptide exit tunnel. The polypeptide is Large ribosomal subunit protein uL4 (Corynebacterium kroppenstedtii (strain DSM 44385 / JCM 11950 / CIP 105744 / CCUG 35717)).